The following is a 103-amino-acid chain: MQNQRIRIRLKAFDHRLIDQSTAEIVDTAKRTGAQVHGPIPLPTRKEHFTILISPHVNKDARDQYVIRTHKRLVDIVKPTEKTVDALMRLELAAGVDVQISLG.

The protein belongs to the universal ribosomal protein uS10 family. As to quaternary structure, part of the 30S ribosomal subunit.

Its function is as follows. Involved in the binding of tRNA to the ribosomes. This is Small ribosomal subunit protein uS10 from Baumannia cicadellinicola subsp. Homalodisca coagulata.